A 388-amino-acid polypeptide reads, in one-letter code: Xylose isomerase (388 aa).

Catalysis depends on residues histidine 54 and aspartate 57. Residues glutamate 181, glutamate 217, histidine 220, aspartate 245, aspartate 255, aspartate 257, and aspartate 287 each contribute to the Mg(2+) site.

It belongs to the xylose isomerase family. In terms of assembly, homotetramer. Mg(2+) serves as cofactor.

It is found in the cytoplasm. The enzyme catalyses alpha-D-xylose = alpha-D-xylulofuranose. This chain is Xylose isomerase, found in Streptomyces olivaceoviridis (Streptomyces corchorusii).